A 215-amino-acid chain; its full sequence is RNA pyrophosphohydrolase (215 aa).

The Nudix hydrolase domain occupies 6-149 (GFRPNVGIIL…KRDVYQLALT (144 aa)). Residues 38-59 (GGIKYGETPMQAMYRELHEETG) carry the Nudix box motif.

The protein belongs to the Nudix hydrolase family. RppH subfamily. The cofactor is a divalent metal cation.

Accelerates the degradation of transcripts by removing pyrophosphate from the 5'-end of triphosphorylated RNA, leading to a more labile monophosphorylated state that can stimulate subsequent ribonuclease cleavage. The chain is RNA pyrophosphohydrolase from Burkholderia multivorans (strain ATCC 17616 / 249).